The primary structure comprises 129 residues: Glycine cleavage system H protein (129 aa).

Residues 24-106 enclose the Lipoyl-binding domain; the sequence is TYTVGITEHA…YAGGWIFKIK (83 aa). Lys-65 is modified (N6-lipoyllysine).

This sequence belongs to the GcvH family. In terms of assembly, the glycine cleavage system is composed of four proteins: P, T, L and H. It depends on (R)-lipoate as a cofactor.

The glycine cleavage system catalyzes the degradation of glycine. The H protein shuttles the methylamine group of glycine from the P protein to the T protein. This Escherichia coli O7:K1 (strain IAI39 / ExPEC) protein is Glycine cleavage system H protein.